We begin with the raw amino-acid sequence, 621 residues long: Cystathionine gamma-synthase (621 aa).

Lys-429 carries the N6-(pyridoxal phosphate)lysine modification.

This sequence belongs to the trans-sulfuration enzymes family. MET7 subfamily. As to quaternary structure, both met-3 and met-7 are required to form a functional cystathionine gamma-synthase. Pyridoxal 5'-phosphate serves as cofactor.

It catalyses the reaction O-succinyl-L-homoserine + L-cysteine = L,L-cystathionine + succinate + H(+). The protein operates within amino-acid biosynthesis; L-methionine biosynthesis via de novo pathway; L-cystathionine from O-succinyl-L-homoserine: step 1/1. In terms of biological role, catalyzes the formation of L-cystathionine from O-succinyl-L-homoserine (OSHS) and L-cysteine, via a gamma-replacement reaction. In the absence of thiol, catalyzes gamma-elimination to form 2-oxobutanoate, succinate and ammonia. The chain is Cystathionine gamma-synthase (met-7) from Neurospora crassa (strain ATCC 24698 / 74-OR23-1A / CBS 708.71 / DSM 1257 / FGSC 987).